The chain runs to 238 residues: NADH-quinone oxidoreductase subunit C (238 aa).

A disordered region spans residues 1 to 20; it reads MSSPDQNPSDAAGQTGSSNE.

The protein belongs to the complex I 30 kDa subunit family. NDH-1 is composed of 14 different subunits. Subunits NuoB, C, D, E, F, and G constitute the peripheral sector of the complex.

The protein resides in the cell membrane. It catalyses the reaction a quinone + NADH + 5 H(+)(in) = a quinol + NAD(+) + 4 H(+)(out). Its function is as follows. NDH-1 shuttles electrons from NADH, via FMN and iron-sulfur (Fe-S) centers, to quinones in the respiratory chain. The immediate electron acceptor for the enzyme in this species is believed to be a menaquinone. Couples the redox reaction to proton translocation (for every two electrons transferred, four hydrogen ions are translocated across the cytoplasmic membrane), and thus conserves the redox energy in a proton gradient. This Mycobacterium marinum (strain ATCC BAA-535 / M) protein is NADH-quinone oxidoreductase subunit C.